A 301-amino-acid chain; its full sequence is Sulfate adenylyltransferase subunit 2 (301 aa).

Belongs to the PAPS reductase family. CysD subfamily. In terms of assembly, heterodimer composed of CysD, the smaller subunit, and CysN.

It carries out the reaction sulfate + ATP + H(+) = adenosine 5'-phosphosulfate + diphosphate. It functions in the pathway sulfur metabolism; hydrogen sulfide biosynthesis; sulfite from sulfate: step 1/3. Functionally, with CysN forms the ATP sulfurylase (ATPS) that catalyzes the adenylation of sulfate producing adenosine 5'-phosphosulfate (APS) and diphosphate, the first enzymatic step in sulfur assimilation pathway. APS synthesis involves the formation of a high-energy phosphoric-sulfuric acid anhydride bond driven by GTP hydrolysis by CysN coupled to ATP hydrolysis by CysD. This chain is Sulfate adenylyltransferase subunit 2, found in Shewanella loihica (strain ATCC BAA-1088 / PV-4).